The sequence spans 303 residues: Putative HTH-type transcriptional regulatory protein Mpal_0031 (303 aa).

The HTH cro/C1-type domain occupies 132 to 189 (LRGLREQRNMSLGDLGAVLGVSRRTISKYESGMGTTLEIAIKIEEVFDSGVIESIDLL). Positions 143–162 (LGDLGAVLGVSRRTISKYES) form a DNA-binding region, H-T-H motif.

The protein is Putative HTH-type transcriptional regulatory protein Mpal_0031 of Methanosphaerula palustris (strain ATCC BAA-1556 / DSM 19958 / E1-9c).